Consider the following 366-residue polypeptide: Transaldolase (366 aa).

The active-site Schiff-base intermediate with substrate is K140.

The protein belongs to the transaldolase family. Type 2 subfamily.

It localises to the cytoplasm. The enzyme catalyses D-sedoheptulose 7-phosphate + D-glyceraldehyde 3-phosphate = D-erythrose 4-phosphate + beta-D-fructose 6-phosphate. Its pathway is carbohydrate degradation; pentose phosphate pathway; D-glyceraldehyde 3-phosphate and beta-D-fructose 6-phosphate from D-ribose 5-phosphate and D-xylulose 5-phosphate (non-oxidative stage): step 2/3. Transaldolase is important for the balance of metabolites in the pentose-phosphate pathway. The sequence is that of Transaldolase from Saccharopolyspora erythraea (strain ATCC 11635 / DSM 40517 / JCM 4748 / NBRC 13426 / NCIMB 8594 / NRRL 2338).